Here is a 374-residue protein sequence, read N- to C-terminus: Histidinol-phosphate aminotransferase (374 aa).

The residue at position 211 (lysine 211) is an N6-(pyridoxal phosphate)lysine. A compositionally biased stretch (low complexity) spans 351–368 (GNSSQDSASKSNSSANND). The interval 351–374 (GNSSQDSASKSNSSANNDELNASN) is disordered.

This sequence belongs to the class-II pyridoxal-phosphate-dependent aminotransferase family. Histidinol-phosphate aminotransferase subfamily. Homodimer. Pyridoxal 5'-phosphate is required as a cofactor.

It catalyses the reaction L-histidinol phosphate + 2-oxoglutarate = 3-(imidazol-4-yl)-2-oxopropyl phosphate + L-glutamate. It functions in the pathway amino-acid biosynthesis; L-histidine biosynthesis; L-histidine from 5-phospho-alpha-D-ribose 1-diphosphate: step 7/9. The chain is Histidinol-phosphate aminotransferase from Photobacterium profundum (strain SS9).